We begin with the raw amino-acid sequence, 98 residues long: UPF0251 protein Sputw3181_3483 (98 aa).

It belongs to the UPF0251 family.

This chain is UPF0251 protein Sputw3181_3483, found in Shewanella sp. (strain W3-18-1).